Consider the following 151-residue polypeptide: Large ribosomal subunit protein bL9 (151 aa).

It belongs to the bacterial ribosomal protein bL9 family.

Functionally, binds to the 23S rRNA. The protein is Large ribosomal subunit protein bL9 of Bordetella petrii (strain ATCC BAA-461 / DSM 12804 / CCUG 43448).